The following is a 101-amino-acid chain: Small ribosomal subunit protein uS14 (101 aa).

The protein belongs to the universal ribosomal protein uS14 family. In terms of assembly, part of the 30S ribosomal subunit. Contacts proteins S3 and S10.

Its function is as follows. Binds 16S rRNA, required for the assembly of 30S particles and may also be responsible for determining the conformation of the 16S rRNA at the A site. The chain is Small ribosomal subunit protein uS14 from Sodalis glossinidius (strain morsitans).